The primary structure comprises 320 residues: Ferrochelatase (320 aa).

Residues His-194 and Glu-275 each coordinate Fe cation.

Belongs to the ferrochelatase family. Monomer.

The protein resides in the cytoplasm. It carries out the reaction heme b + 2 H(+) = protoporphyrin IX + Fe(2+). The protein operates within porphyrin-containing compound metabolism; protoheme biosynthesis; protoheme from protoporphyrin-IX: step 1/1. In terms of biological role, catalyzes the ferrous insertion into protoporphyrin IX. In Escherichia coli O45:K1 (strain S88 / ExPEC), this protein is Ferrochelatase.